We begin with the raw amino-acid sequence, 268 residues long: Indole-3-glycerol phosphate synthase (268 aa).

It belongs to the TrpC family.

It catalyses the reaction 1-(2-carboxyphenylamino)-1-deoxy-D-ribulose 5-phosphate + H(+) = (1S,2R)-1-C-(indol-3-yl)glycerol 3-phosphate + CO2 + H2O. Its pathway is amino-acid biosynthesis; L-tryptophan biosynthesis; L-tryptophan from chorismate: step 4/5. This Acinetobacter baylyi (strain ATCC 33305 / BD413 / ADP1) protein is Indole-3-glycerol phosphate synthase (trpC).